The following is a 172-amino-acid chain: Disulfide bond formation protein B (172 aa).

Over 1-13 the chain is Cytoplasmic; sequence MNWLAQLPTQRTP. A helical membrane pass occupies residues 14–30; the sequence is WLLFSGIVFLLEITALF. Residues 31–48 are Periplasmic-facing; that stretch reads FQYKMGLAPCIMCIYQRT. Cys-40 and Cys-43 form a disulfide bridge. A helical membrane pass occupies residues 49-64; that stretch reads AVLGLLIAGIIGTSNP. Residues 65-71 are Cytoplasmic-facing; it reads EHRGVRL. Residues 72–89 form a helical membrane-spanning segment; the sequence is LAYSVWAVSSVWGFIIAR. The Periplasmic segment spans residues 90 to 145; sequence EHIEMQTTTDPFAFSCEFEPNFPAFMPLHEWIPSFFAATGDCGNIDWQFAGLSMPA. Cys-105 and Cys-131 are oxidised to a cystine. A helical transmembrane segment spans residues 146-164; the sequence is WMEVIFALFAATLFLLVTS. The Cytoplasmic portion of the chain corresponds to 165-172; it reads RLMTKRSL.

It belongs to the DsbB family.

The protein resides in the cell inner membrane. Its function is as follows. Required for disulfide bond formation in some periplasmic proteins. Acts by oxidizing the DsbA protein. The chain is Disulfide bond formation protein B from Pseudoalteromonas translucida (strain TAC 125).